The sequence spans 826 residues: BLOC-2 complex member HPS5 homolog (826 aa).

WD repeat units lie at residues 22–61 (KHHNRIKYTCFDISDSYIIFGASSGSLYLFNRNGKFLLLI), 63–102 (NKHGAITSLSISANSKYVAFATQRSLICVYAVNLSAQATP), and 110–149 (DQSVQVTCIHWTQDEKQFYYGDSRGQVSLVLLSSFIGHSL). The segment covering 422-446 (ALDTHSSGGSSATTERSLSGGSSSR) has biased composition (polar residues). The tract at residues 422–447 (ALDTHSSGGSSATTERSLSGGSSSRA) is disordered.

It belongs to the HPS5 family. As to expression, expressed in eye pigment granules.

Its function is as follows. Has a role in the biogenesis of eye pigment granules. Eye pigment granules are specialized forms of late endosomes or lysosomes. Biogenesis of pigment granules in the eye requires molecular components required for protein delivery to lysosomes. The polypeptide is BLOC-2 complex member HPS5 homolog (Drosophila melanogaster (Fruit fly)).